The primary structure comprises 274 residues: UPF0173 metal-dependent hydrolase A2cp1_1196 (274 aa).

It belongs to the UPF0173 family.

In Anaeromyxobacter dehalogenans (strain 2CP-1 / ATCC BAA-258), this protein is UPF0173 metal-dependent hydrolase A2cp1_1196.